Reading from the N-terminus, the 591-residue chain is L-fucose isomerase (591 aa).

Residues Glu-337 and Asp-361 each act as proton acceptor in the active site. Residues Glu-337, Asp-361, and His-528 each coordinate Mn(2+).

It belongs to the L-fucose isomerase family. As to quaternary structure, homohexamer. Mn(2+) serves as cofactor.

It is found in the cytoplasm. The enzyme catalyses L-fucose = L-fuculose. The protein operates within carbohydrate degradation; L-fucose degradation; L-lactaldehyde and glycerone phosphate from L-fucose: step 1/3. Functionally, converts the aldose L-fucose into the corresponding ketose L-fuculose. The sequence is that of L-fucose isomerase from Salmonella schwarzengrund (strain CVM19633).